The primary structure comprises 1396 residues: ATP-binding cassette transporter pdr1 (1396 aa).

A disordered region spans residues 1–22 (MSEQEKGKGDLDDPNSKNTKCP). Positions 73–320 (LHPINIIFRT…FLDLGFIPAK (248 aa)) constitute an ABC transporter 1 domain. Residues 412 to 622 (LQVFATAKVT…GYESIMLNEF (211 aa)) form the ABC transmembrane type-2 1 domain. The next 6 membrane-spanning stretches (helical) occupy residues 431–451 (YIAT…SLFY), 466–486 (VLSN…DIIF), 512–532 (LVEF…VYFL), 543–563 (FIFY…FRFI), 572–592 (IAAL…GAVM), and 680–700 (GIIL…ANFI). One can recognise an ABC transporter 2 domain in the interval 758 to 1001 (LCWRDLNFTV…LVNYFKRIHG (244 aa)). 794–801 (GENKSGKS) provides a ligand contact to ATP. Residues 1071–1286 (FQIYKISMRN…FLEGMIGGVL (216 aa)) enclose the ABC transmembrane type-2 2 domain. 5 consecutive transmembrane segments (helical) span residues 1095 to 1115 (VAFN…QGVG), 1166 to 1186 (FIIA…TLFF), 1208 to 1228 (FAWL…IGIA), 1245 to 1265 (FVFI…VGFW), and 1361 to 1381 (CIMI…YYII).

This sequence belongs to the ABC transporter superfamily. ABCG family. PDR (TC 3.A.1.205) subfamily.

It is found in the endoplasmic reticulum membrane. The sequence is that of ATP-binding cassette transporter pdr1 (pdr1) from Schizosaccharomyces pombe (strain 972 / ATCC 24843) (Fission yeast).